A 249-amino-acid chain; its full sequence is Tryptophan synthase alpha chain (249 aa).

Active-site proton acceptor residues include glutamate 43 and aspartate 54.

The protein belongs to the TrpA family. As to quaternary structure, tetramer of two alpha and two beta chains.

The catalysed reaction is (1S,2R)-1-C-(indol-3-yl)glycerol 3-phosphate + L-serine = D-glyceraldehyde 3-phosphate + L-tryptophan + H2O. It functions in the pathway amino-acid biosynthesis; L-tryptophan biosynthesis; L-tryptophan from chorismate: step 5/5. Functionally, the alpha subunit is responsible for the aldol cleavage of indoleglycerol phosphate to indole and glyceraldehyde 3-phosphate. The polypeptide is Tryptophan synthase alpha chain (Campylobacter jejuni subsp. jejuni serotype O:6 (strain 81116 / NCTC 11828)).